A 619-amino-acid polypeptide reads, in one-letter code: Chaperone protein HscA homolog (619 aa).

The protein belongs to the heat shock protein 70 family.

Chaperone involved in the maturation of iron-sulfur cluster-containing proteins. Has a low intrinsic ATPase activity which is markedly stimulated by HscB. The sequence is that of Chaperone protein HscA homolog from Shewanella denitrificans (strain OS217 / ATCC BAA-1090 / DSM 15013).